A 238-amino-acid polypeptide reads, in one-letter code: Orotate phosphoribosyltransferase (238 aa).

Lysine 29 contributes to the 5-phospho-alpha-D-ribose 1-diphosphate binding site. 37–38 is a binding site for orotate; sequence FF. Residues 87-88, arginine 118, lysine 119, lysine 122, histidine 124, and 144-152 contribute to the 5-phospho-alpha-D-ribose 1-diphosphate site; these read YK and DDVITAGTA. The orotate site is built by threonine 148 and arginine 176.

This sequence belongs to the purine/pyrimidine phosphoribosyltransferase family. PyrE subfamily. In terms of assembly, homodimer.

It carries out the reaction orotidine 5'-phosphate + diphosphate = orotate + 5-phospho-alpha-D-ribose 1-diphosphate. It functions in the pathway pyrimidine metabolism; UMP biosynthesis via de novo pathway; UMP from orotate: step 1/2. In terms of biological role, catalyzes the transfer of a ribosyl phosphate group from 5-phosphoribose 1-diphosphate to orotate, leading to the formation of orotidine monophosphate (OMP). The chain is Orotate phosphoribosyltransferase (URA5) from Coccidioides immitis (strain RS) (Valley fever fungus).